Reading from the N-terminus, the 37-residue chain is Cytochrome b6-f complex subunit 5 (37 aa).

A helical membrane pass occupies residues 5-25 (LLSGIVLGLIPITLAGLFVTA).

Belongs to the PetG family. As to quaternary structure, the 4 large subunits of the cytochrome b6-f complex are cytochrome b6, subunit IV (17 kDa polypeptide, PetD), cytochrome f and the Rieske protein, while the 4 small subunits are PetG, PetL, PetM and PetN. The complex functions as a dimer.

The protein resides in the plastid. It localises to the chloroplast thylakoid membrane. In terms of biological role, component of the cytochrome b6-f complex, which mediates electron transfer between photosystem II (PSII) and photosystem I (PSI), cyclic electron flow around PSI, and state transitions. PetG is required for either the stability or assembly of the cytochrome b6-f complex. In Angiopteris evecta (Mule's foot fern), this protein is Cytochrome b6-f complex subunit 5.